Here is a 152-residue protein sequence, read N- to C-terminus: Protein-export protein SecB (152 aa).

This sequence belongs to the SecB family. As to quaternary structure, homotetramer, a dimer of dimers. One homotetramer interacts with 1 SecA dimer.

It is found in the cytoplasm. In terms of biological role, one of the proteins required for the normal export of preproteins out of the cell cytoplasm. It is a molecular chaperone that binds to a subset of precursor proteins, maintaining them in a translocation-competent state. It also specifically binds to its receptor SecA. This chain is Protein-export protein SecB, found in Verminephrobacter eiseniae (strain EF01-2).